We begin with the raw amino-acid sequence, 377 residues long: Serine protease inhibitor (377 aa).

The signal sequence occupies residues 1–27 (MAALQAAVSSQLAISFFSSLIVPGAEK). The N-linked (GlcNAc...) asparagine glycan is linked to Asn301. The segment at 328-349 (GTEAAAATGFGVNFMSMPMQVR) is RCL. Asn361 carries N-linked (GlcNAc...) asparagine glycosylation.

The protein belongs to the serpin family.

Inhibitor of serine proteases. Inhibits chymotrypsin, cathepsin G and human neutrophil elastase. The polypeptide is Serine protease inhibitor (Cyanea capillata (Lion's mane jellyfish)).